The following is a 159-amino-acid chain: MNIKLITVGKLKEKYLTEGIAEYTKRLSRFCKVQVVELIDEKTPENASEAQNNQIMAREGERIQAKIGSRDYVIVLAIEGKQFPSEEFSQKLEAIAVNGYSDITFIIGGSLGLSKAIKQRANLKMSFGLLTLPHQLMRLVLIEQIYRAFMIQQGSPYHK.

Residues Leu76, Gly108, and 127-132 (FGLLTL) contribute to the S-adenosyl-L-methionine site.

Belongs to the RNA methyltransferase RlmH family. In terms of assembly, homodimer.

It localises to the cytoplasm. The enzyme catalyses pseudouridine(1915) in 23S rRNA + S-adenosyl-L-methionine = N(3)-methylpseudouridine(1915) in 23S rRNA + S-adenosyl-L-homocysteine + H(+). Functionally, specifically methylates the pseudouridine at position 1915 (m3Psi1915) in 23S rRNA. This Leuconostoc mesenteroides subsp. mesenteroides (strain ATCC 8293 / DSM 20343 / BCRC 11652 / CCM 1803 / JCM 6124 / NCDO 523 / NBRC 100496 / NCIMB 8023 / NCTC 12954 / NRRL B-1118 / 37Y) protein is Ribosomal RNA large subunit methyltransferase H.